The sequence spans 160 residues: Cytochrome b6-f complex subunit 4 (160 aa).

The next 3 membrane-spanning stretches (helical) occupy residues 36-56 (LLYVFPVCILGTFACCIGLAV), 95-115 (LLGVLAMARVPAGLITVPFIE), and 131-151 (LVFILGFFTAVWLGIGACLPI).

Belongs to the cytochrome b family. PetD subfamily. As to quaternary structure, the 4 large subunits of the cytochrome b6-f complex are cytochrome b6, subunit IV (17 kDa polypeptide, petD), cytochrome f and the Rieske protein, while the 4 small subunits are petG, petL, petM and petN. The complex functions as a dimer.

The protein resides in the plastid. It localises to the chloroplast thylakoid membrane. In terms of biological role, component of the cytochrome b6-f complex, which mediates electron transfer between photosystem II (PSII) and photosystem I (PSI), cyclic electron flow around PSI, and state transitions. The polypeptide is Cytochrome b6-f complex subunit 4 (Trieres chinensis (Marine centric diatom)).